The primary structure comprises 398 residues: Aspartate aminotransferase (398 aa).

3 residues coordinate L-aspartate: Gly-36, Trp-132, and Asn-185. Residue Lys-248 is modified to N6-(pyridoxal phosphate)lysine. An L-aspartate-binding site is contributed by Arg-376.

Belongs to the class-I pyridoxal-phosphate-dependent aminotransferase family. In terms of assembly, homodimer. Pyridoxal 5'-phosphate is required as a cofactor.

Its subcellular location is the cytoplasm. It catalyses the reaction L-aspartate + 2-oxoglutarate = oxaloacetate + L-glutamate. The sequence is that of Aspartate aminotransferase (aspC) from Pseudomonas aeruginosa (strain ATCC 15692 / DSM 22644 / CIP 104116 / JCM 14847 / LMG 12228 / 1C / PRS 101 / PAO1).